A 630-amino-acid polypeptide reads, in one-letter code: Chaperone protein HtpG (630 aa).

The tract at residues 1 to 336 (MTTTVEQTAE…TADLPLNVSR (336 aa)) is a; substrate-binding. The segment at 337–551 (EMIQESPILA…EDGYDRQMEK (215 aa)) is b. Residues 552–630 (ILQNAGRLQG…VFERSVRSEG (79 aa)) are c.

It belongs to the heat shock protein 90 family. In terms of assembly, homodimer.

Its subcellular location is the cytoplasm. Molecular chaperone. Has ATPase activity. The sequence is that of Chaperone protein HtpG from Rhizobium etli (strain ATCC 51251 / DSM 11541 / JCM 21823 / NBRC 15573 / CFN 42).